Reading from the N-terminus, the 155-residue chain is Ribosomal RNA large subunit methyltransferase H (155 aa).

Residues Leu-73, Gly-104, and 123 to 128 (LSRMTF) contribute to the S-adenosyl-L-methionine site.

Belongs to the RNA methyltransferase RlmH family. In terms of assembly, homodimer.

The protein resides in the cytoplasm. The enzyme catalyses pseudouridine(1915) in 23S rRNA + S-adenosyl-L-methionine = N(3)-methylpseudouridine(1915) in 23S rRNA + S-adenosyl-L-homocysteine + H(+). Specifically methylates the pseudouridine at position 1915 (m3Psi1915) in 23S rRNA. The polypeptide is Ribosomal RNA large subunit methyltransferase H (Methylococcus capsulatus (strain ATCC 33009 / NCIMB 11132 / Bath)).